Consider the following 156-residue polypeptide: Small ribosomal subunit protein uS7c (156 aa).

The protein belongs to the universal ribosomal protein uS7 family. As to quaternary structure, part of the 30S ribosomal subunit.

Its subcellular location is the plastid. Functionally, one of the primary rRNA binding proteins, it binds directly to 16S rRNA where it nucleates assembly of the head domain of the 30S subunit. In Prototheca wickerhamii, this protein is Small ribosomal subunit protein uS7c (rps7).